An 858-amino-acid polypeptide reads, in one-letter code: Protein translocase subunit SecA (858 aa).

ATP-binding positions include Gln85, 103–107 (GEGKT), and Asp511. Cys840, Cys842, Cys851, and Cys852 together coordinate Zn(2+).

This sequence belongs to the SecA family. Monomer and homodimer. Part of the essential Sec protein translocation apparatus which comprises SecA, SecYEG and auxiliary proteins SecDF. Other proteins may also be involved. Zn(2+) is required as a cofactor.

The protein resides in the cell membrane. It localises to the cytoplasm. It carries out the reaction ATP + H2O + cellular proteinSide 1 = ADP + phosphate + cellular proteinSide 2.. In terms of biological role, part of the Sec protein translocase complex. Interacts with the SecYEG preprotein conducting channel. Has a central role in coupling the hydrolysis of ATP to the transfer of proteins into and across the cell membrane, serving as an ATP-driven molecular motor driving the stepwise translocation of polypeptide chains across the membrane. The polypeptide is Protein translocase subunit SecA (Lachnoclostridium phytofermentans (strain ATCC 700394 / DSM 18823 / ISDg) (Clostridium phytofermentans)).